The primary structure comprises 148 residues: Arginine repressor (148 aa).

Belongs to the ArgR family.

The protein resides in the cytoplasm. The protein operates within amino-acid biosynthesis; L-arginine biosynthesis [regulation]. Functionally, regulates arginine biosynthesis genes. The sequence is that of Arginine repressor from Prosthecochloris aestuarii (strain DSM 271 / SK 413).